The following is a 150-amino-acid chain: Large ribosomal subunit protein bL9 (150 aa).

It belongs to the bacterial ribosomal protein bL9 family.

In terms of biological role, binds to the 23S rRNA. This Shewanella baltica (strain OS155 / ATCC BAA-1091) protein is Large ribosomal subunit protein bL9.